Consider the following 266-residue polypeptide: Pyridoxal phosphate phosphatase YigL (266 aa).

Catalysis depends on D8, which acts as the Nucleophile. D8 is a Mg(2+) binding site. Residue L9 participates in phosphate binding. Mg(2+) is bound at residue D10. Phosphate-binding positions include T42–G43 and K191. D214 serves as a coordination point for Mg(2+). Position 217 (N217) interacts with phosphate.

It belongs to the HAD-like hydrolase superfamily. Cof family. Mg(2+) serves as cofactor. Requires Mn(2+) as cofactor. It depends on Co(2+) as a cofactor. The cofactor is Zn(2+).

It catalyses the reaction pyridoxal 5'-phosphate + H2O = pyridoxal + phosphate. The enzyme catalyses sugar phosphate + H2O = sugar + phosphate.. Catalyzes the dephosphorylation of pyridoxal-phosphate (PLP) and sugar phosphate. This chain is Pyridoxal phosphate phosphatase YigL (yigL), found in Escherichia coli O157:H7.